Reading from the N-terminus, the 476-residue chain is Aspartyl/glutamyl-tRNA(Asn/Gln) amidotransferase subunit B (476 aa).

The protein belongs to the GatB/GatE family. GatB subfamily. As to quaternary structure, heterotrimer of A, B and C subunits.

It catalyses the reaction L-glutamyl-tRNA(Gln) + L-glutamine + ATP + H2O = L-glutaminyl-tRNA(Gln) + L-glutamate + ADP + phosphate + H(+). The catalysed reaction is L-aspartyl-tRNA(Asn) + L-glutamine + ATP + H2O = L-asparaginyl-tRNA(Asn) + L-glutamate + ADP + phosphate + 2 H(+). Its function is as follows. Allows the formation of correctly charged Asn-tRNA(Asn) or Gln-tRNA(Gln) through the transamidation of misacylated Asp-tRNA(Asn) or Glu-tRNA(Gln) in organisms which lack either or both of asparaginyl-tRNA or glutaminyl-tRNA synthetases. The reaction takes place in the presence of glutamine and ATP through an activated phospho-Asp-tRNA(Asn) or phospho-Glu-tRNA(Gln). In Bacillus pumilus (strain SAFR-032), this protein is Aspartyl/glutamyl-tRNA(Asn/Gln) amidotransferase subunit B.